Reading from the N-terminus, the 656-residue chain is F-box/LRR-repeat protein 10 (656 aa).

Residues 20–66 enclose the F-box domain; it reads ERSLDLLPAALLETIMTKLDVASLCSLASTCKTLKSCVTRVLTFTPN. LRR repeat units lie at residues 71 to 96, 120 to 145, 151 to 176, 194 to 221, 243 to 268, 277 to 301, 310 to 335, 336 to 361, 362 to 387, 388 to 412, 413 to 437, 439 to 463, 464 to 491, 492 to 517, 518 to 551, and 552 to 578; these read NVSL…KLDC, CRDF…CLGS, GRSI…ALMF, SDRL…EISG, VDCI…DIRD, VSDL…SLIR, FRRV…CLGG, FCRV…SIYH, GPKL…SLRR, CHLL…DLRG, CRNL…LLDG, DISD…SVRG, CRNL…DLSN, LPNL…QLRE, CRLI…DLYD, and CGGI…GITG. Residues 632-656 are disordered; that stretch reads ILGDEGDVEMEDAEDESEEDASEED.

This Arabidopsis thaliana (Mouse-ear cress) protein is F-box/LRR-repeat protein 10 (FBL10).